A 368-amino-acid chain; its full sequence is Phosphate acyltransferase (368 aa).

A disordered region spans residues 334 to 368; that stretch reads AAPLGESGRDADGAGQASPSAGQPAEPSAALSSKT.

The protein belongs to the PlsX family. Homodimer. Probably interacts with PlsY.

It is found in the cytoplasm. It catalyses the reaction a fatty acyl-[ACP] + phosphate = an acyl phosphate + holo-[ACP]. It participates in lipid metabolism; phospholipid metabolism. Its function is as follows. Catalyzes the reversible formation of acyl-phosphate (acyl-PO(4)) from acyl-[acyl-carrier-protein] (acyl-ACP). This enzyme utilizes acyl-ACP as fatty acyl donor, but not acyl-CoA. In Burkholderia thailandensis (strain ATCC 700388 / DSM 13276 / CCUG 48851 / CIP 106301 / E264), this protein is Phosphate acyltransferase.